The primary structure comprises 633 residues: Alpha-amylase (633 aa).

Catalysis depends on Glu-123, which acts as the Nucleophile. The Proton donor role is filled by Asp-214.

This sequence belongs to the glycosyl hydrolase 57 family.

The enzyme catalyses Endohydrolysis of (1-&gt;4)-alpha-D-glucosidic linkages in polysaccharides containing three or more (1-&gt;4)-alpha-linked D-glucose units.. This Pyrococcus horikoshii (strain ATCC 700860 / DSM 12428 / JCM 9974 / NBRC 100139 / OT-3) protein is Alpha-amylase (amyA).